Reading from the N-terminus, the 263-residue chain is 3-methyl-2-oxobutanoate hydroxymethyltransferase 2 (263 aa).

2 residues coordinate Mg(2+): aspartate 45 and aspartate 84. 3-methyl-2-oxobutanoate-binding positions include 45–46 (DS), aspartate 84, and lysine 112. Residue glutamate 114 participates in Mg(2+) binding. Glutamate 181 acts as the Proton acceptor in catalysis.

This sequence belongs to the PanB family. In terms of assembly, homodecamer; pentamer of dimers. The cofactor is Mg(2+).

The protein localises to the cytoplasm. It catalyses the reaction 3-methyl-2-oxobutanoate + (6R)-5,10-methylene-5,6,7,8-tetrahydrofolate + H2O = 2-dehydropantoate + (6S)-5,6,7,8-tetrahydrofolate. It functions in the pathway cofactor biosynthesis; (R)-pantothenate biosynthesis; (R)-pantoate from 3-methyl-2-oxobutanoate: step 1/2. Its function is as follows. Catalyzes the reversible reaction in which hydroxymethyl group from 5,10-methylenetetrahydrofolate is transferred onto alpha-ketoisovalerate to form ketopantoate. The chain is 3-methyl-2-oxobutanoate hydroxymethyltransferase 2 from Aliivibrio fischeri (strain ATCC 700601 / ES114) (Vibrio fischeri).